Here is an 814-residue protein sequence, read N- to C-terminus: Glycosyltransferase GlyD (814 aa).

The GT8 domain stretch occupies residues 1 to 264 (MNKTIVLAGD…SQILQHHMGE (264 aa)). Residues 8 to 13 (AGDRNY) and 102 to 103 (DS) each bind UDP. Aspartate 102, aspartate 104, and histidine 226 together coordinate Mn(2+). UDP is bound at residue 226–232 (HFTTYRK). The tract at residues 542 to 814 (EKPLDIIQVK…NSQIVARILN (273 aa)) is GT-D domain.

This sequence in the N-terminal section; belongs to the glycosyltransferase 8 family. In the C-terminal section; belongs to the GT-D family.

It participates in protein modification; protein glycosylation. Involved in the polymorphic O-glycosylation of the serine-rich repeat protein PsrP. Catalyzes the third step in glycosylation PsrP in this bacteria. Transfers glucose from UDP-glucose to the terminal glucose moiety of already-glycosylated PsrP (using truncated substrates with PsrP SSR1-GlcNAc-Glc); the C-terminal GT-D domain is sufficient for this reaction in vitro. Also transfers galactose from UDP-galactose to the terminal glucose moiety of already-glycosylated PsrP; the C-terminal GT-D domain is also sufficient for this reaction in vitro. Activity is much higher with UDP-glucose, and the enzyme has a very marked preference for PsrP substrate that has already been modified by GlcNAc and glucose. In vitro has hydrolytic activity against UDP-galactose and to a lesser extent against UDP-glucose. Its function is as follows. Also catalyzes the fourth step in glycosylation of PsrP in this bacteria. Can transfer the sugar from both UDP-glucose and UDP-galactose to the terminal sugar moiety of PsrP-GlcNAc-Glc-Glc and PsrP-GlcNAc-Glc-Gal; the C-terminal GT-D domain is also sufficient for this reaction in vitro (using truncated substrates with glycosylated PsrP SSR1). The N-terminal GT-D domain can transfer galactose from UDP-galactose to PsrP-GlcNAc-Glc-Gal or PsrP-GlcNAc-Glc-Glc in the fourth step. The chain is Glycosyltransferase GlyD from Streptococcus pneumoniae serotype 4 (strain ATCC BAA-334 / TIGR4).